Here is a 410-residue protein sequence, read N- to C-terminus: LIMR family protein SELMODRAFT_432208 (410 aa).

5 consecutive transmembrane segments (helical) span residues 30 to 50, 67 to 87, 129 to 149, 156 to 176, and 179 to 199; these read LWWA…IFFY, LWVV…YAVI, VTLM…LTTL, ICLD…NTII, and ILFM…LIFA. A coiled-coil region spans residues 245–274; sequence RMFRKNVKKVQQELVFLEDDVEALNEAFPQ. 2 helical membrane-spanning segments follow: residues 288-308 and 330-350; these read LVFG…IIVF and GGLL…MSVI. The span at 389-400 shows a compositional bias: low complexity; that stretch reads PSSAMDSSSWSA. Residues 389–410 are disordered; it reads PSSAMDSSSWSADRPCRPWPWP.

The protein belongs to the LIMR family.

It localises to the membrane. The polypeptide is LIMR family protein SELMODRAFT_432208 (Selaginella moellendorffii (Spikemoss)).